The chain runs to 542 residues: CTP synthase (542 aa).

Positions 1 to 265 are amidoligase domain; it reads MTRYIFVTGG…DDFVVERFGL (265 aa). S13 contributes to the CTP binding site. Residue S13 participates in UTP binding. ATP-binding positions include 14–19 and D71; that span reads SLGKGI. Mg(2+)-binding residues include D71 and E139. Residues 146–148, 186–191, and K222 each bind CTP; these read DIE and KTKPTQ. UTP-binding positions include 186 to 191 and K222; that span reads KTKPTQ. The 252-residue stretch at 290–541 folds into the Glutamine amidotransferase type-1 domain; that stretch reads TIAMVGKYME…VKAALAQKNK (252 aa). G351 contacts L-glutamine. C378 acts as the Nucleophile; for glutamine hydrolysis in catalysis. L-glutamine-binding positions include 379-382, E402, and R469; that span reads LGMQ. Catalysis depends on residues H514 and E516.

This sequence belongs to the CTP synthase family. In terms of assembly, homotetramer.

The enzyme catalyses UTP + L-glutamine + ATP + H2O = CTP + L-glutamate + ADP + phosphate + 2 H(+). It carries out the reaction L-glutamine + H2O = L-glutamate + NH4(+). The catalysed reaction is UTP + NH4(+) + ATP = CTP + ADP + phosphate + 2 H(+). It functions in the pathway pyrimidine metabolism; CTP biosynthesis via de novo pathway; CTP from UDP: step 2/2. Allosterically activated by GTP, when glutamine is the substrate; GTP has no effect on the reaction when ammonia is the substrate. The allosteric effector GTP functions by stabilizing the protein conformation that binds the tetrahedral intermediate(s) formed during glutamine hydrolysis. Inhibited by the product CTP, via allosteric rather than competitive inhibition. Its function is as follows. Catalyzes the ATP-dependent amination of UTP to CTP with either L-glutamine or ammonia as the source of nitrogen. Regulates intracellular CTP levels through interactions with the four ribonucleotide triphosphates. This Pseudomonas entomophila (strain L48) protein is CTP synthase.